Consider the following 263-residue polypeptide: Indole-3-glycerol phosphate synthase (263 aa).

It belongs to the TrpC family.

It catalyses the reaction 1-(2-carboxyphenylamino)-1-deoxy-D-ribulose 5-phosphate + H(+) = (1S,2R)-1-C-(indol-3-yl)glycerol 3-phosphate + CO2 + H2O. It functions in the pathway amino-acid biosynthesis; L-tryptophan biosynthesis; L-tryptophan from chorismate: step 4/5. This chain is Indole-3-glycerol phosphate synthase, found in Polaromonas naphthalenivorans (strain CJ2).